Here is a 79-residue protein sequence, read N- to C-terminus: MSEISVTQTLNTLGLRCPEPVMLVRKNIRHLNDGEILLIIADDPATTRDIPSFCQFMDHTLLQSEVEKPPFKYWVKRGK.

Cys-17 acts as the Cysteine persulfide intermediate in catalysis.

Belongs to the sulfur carrier protein TusA family.

It localises to the cytoplasm. Functionally, sulfur carrier protein which probably makes part of a sulfur-relay system. In Haemophilus influenzae (strain 86-028NP), this protein is Sulfur carrier protein TusA.